The sequence spans 201 residues: MTEVEPKSVLYCGVCSFPPEFCEFGGSFKRCKEWLEQNDKELYEKLYSEDALANATSTLSIDKEQKIAKELEKKQAKEEAKQERELKKQLASKVTIKRIERNKRKHVIAISGLEVFDIDMKKLSKTFASKFATGASVTKNAEKKDEIIVQGDVSDEARAYIEKLLEEKGLNEVKVEQIDDKKKKKAAEAAEAAAAATGNKK.

The SUI1 domain occupies 94 to 165; it reads VTIKRIERNK…EARAYIEKLL (72 aa).

Belongs to the DENR family. Interacts with the 40S ribosomal subunit.

The protein localises to the cytoplasm. This chain is Translation machinery-associated protein 22 (TMA22), found in Meyerozyma guilliermondii (strain ATCC 6260 / CBS 566 / DSM 6381 / JCM 1539 / NBRC 10279 / NRRL Y-324) (Yeast).